The primary structure comprises 56 residues: Large ribosomal subunit protein bL32 (56 aa).

Residues 1–16 are compositionally biased toward basic residues; sequence MAVQKNKKSRSKRGMR. The interval 1 to 36 is disordered; it reads MAVQKNKKSRSKRGMRRSHDSLSTPQLSVDSTSGEL. Residues 21–34 are compositionally biased toward polar residues; sequence SLSTPQLSVDSTSG.

This sequence belongs to the bacterial ribosomal protein bL32 family.

The polypeptide is Large ribosomal subunit protein bL32 (Shewanella sediminis (strain HAW-EB3)).